A 262-amino-acid polypeptide reads, in one-letter code: Homeobox protein vent1 (262 aa).

2 stretches are compositionally biased toward basic and acidic residues: residues 16–26 and 44–55; these read REEAPDGKDSV and YAKEIPRRKDGQ. The disordered stretch occupies residues 16-129; that stretch reads REEAPDGKDS…KSPKSDLQRR (114 aa). Polar residues predominate over residues 58 to 79; that stretch reads GEITSFQCSSEEARNRQFSNPS. Basic and acidic residues predominate over residues 114-128; the sequence is DTEHRSKSPKSDLQR. The homeobox DNA-binding region spans 127 to 186; the sequence is QRRLRTAFTPQQITRLEQAFNKQRYLGASERKKLATSLQLSEIQVKTWFQNRRMKLKRQI.

Its subcellular location is the nucleus. In terms of biological role, transcriptional repressor. Cooperates with vent2 in a ventral signaling pathway downstream of bmp4, which antagonizes the Spemann organizer and dorsal mesoderm formation, and leads to ventral mesoderm formation. Acts downstream of bmp4 to repress transcription of foxa4-B/XFD-1'. Binds to DNA with preference for the target sequence 5'-CTATT[T/C]G-3'. Also binds 5'-TGCATTTTG-3' at a lower frequency, and occasionally 5'-TTGATC-3'. Binds to the homeobox 2 (HBX2) repressor element in the promoter of the myf5 gene. Cooperates with vent2 to repress myf5 expression in the ventral domain. The polypeptide is Homeobox protein vent1 (Xenopus tropicalis (Western clawed frog)).